A 347-amino-acid polypeptide reads, in one-letter code: Phosphate acyltransferase (347 aa).

This sequence belongs to the PlsX family. Homodimer. Probably interacts with PlsY.

It is found in the cytoplasm. It carries out the reaction a fatty acyl-[ACP] + phosphate = an acyl phosphate + holo-[ACP]. It participates in lipid metabolism; phospholipid metabolism. Catalyzes the reversible formation of acyl-phosphate (acyl-PO(4)) from acyl-[acyl-carrier-protein] (acyl-ACP). This enzyme utilizes acyl-ACP as fatty acyl donor, but not acyl-CoA. The protein is Phosphate acyltransferase of Pediococcus pentosaceus (strain ATCC 25745 / CCUG 21536 / LMG 10740 / 183-1w).